Here is a 101-residue protein sequence, read N- to C-terminus: Small ribosomal subunit protein bS18c (101 aa).

The span at 1 to 19 (MDKSKRPFRKSKRSFRKRL) shows a compositional bias: basic residues. The tract at residues 1-23 (MDKSKRPFRKSKRSFRKRLPPIG) is disordered.

The protein belongs to the bacterial ribosomal protein bS18 family. Part of the 30S ribosomal subunit.

The protein localises to the plastid. Its subcellular location is the chloroplast. This chain is Small ribosomal subunit protein bS18c, found in Chloranthus spicatus (Chulantree).